The following is a 282-amino-acid chain: D-alanine aminotransferase (282 aa).

Tyr32 serves as a coordination point for substrate. Arg51 lines the pyridoxal 5'-phosphate pocket. Substrate contacts are provided by Arg99 and His101. Lys146 (proton acceptor) is an active-site residue. Lys146 is subject to N6-(pyridoxal phosphate)lysine. Glu178 contributes to the pyridoxal 5'-phosphate binding site.

The protein belongs to the class-IV pyridoxal-phosphate-dependent aminotransferase family. In terms of assembly, homodimer. It depends on pyridoxal 5'-phosphate as a cofactor.

The enzyme catalyses D-alanine + 2-oxoglutarate = D-glutamate + pyruvate. Functionally, acts on the D-isomers of alanine, leucine, aspartate, glutamate, aminobutyrate, norvaline and asparagine. The enzyme transfers an amino group from a substrate D-amino acid to the pyridoxal phosphate cofactor to form pyridoxamine and an alpha-keto acid in the first half-reaction. The second half-reaction is the reverse of the first, transferring the amino group from the pyridoxamine to a second alpha-keto acid to form the product D-amino acid via a ping-pong mechanism. This is an important process in the formation of D-alanine and D-glutamate, which are essential bacterial cell wall components. This Staphylococcus aureus (strain MW2) protein is D-alanine aminotransferase (dat).